Reading from the N-terminus, the 475-residue chain is Ribulose bisphosphate carboxylase large chain (475 aa).

Positions M1–S2 are excised as a propeptide. P3 carries the post-translational modification N-acetylproline. K14 is subject to N6,N6,N6-trimethyllysine. The substrate site is built by N123 and T173. K175 acts as the Proton acceptor in catalysis. K177 serves as a coordination point for substrate. Mg(2+) is bound by residues K201, D203, and E204. At K201 the chain carries N6-carboxylysine. The active-site Proton acceptor is H294. R295, H327, and S379 together coordinate substrate.

It belongs to the RuBisCO large chain family. Type I subfamily. Heterohexadecamer of 8 large chains and 8 small chains; disulfide-linked. The disulfide link is formed within the large subunit homodimers. Mg(2+) is required as a cofactor. The disulfide bond which can form in the large chain dimeric partners within the hexadecamer appears to be associated with oxidative stress and protein turnover.

Its subcellular location is the plastid. The protein resides in the chloroplast. The catalysed reaction is 2 (2R)-3-phosphoglycerate + 2 H(+) = D-ribulose 1,5-bisphosphate + CO2 + H2O. It carries out the reaction D-ribulose 1,5-bisphosphate + O2 = 2-phosphoglycolate + (2R)-3-phosphoglycerate + 2 H(+). Functionally, ruBisCO catalyzes two reactions: the carboxylation of D-ribulose 1,5-bisphosphate, the primary event in carbon dioxide fixation, as well as the oxidative fragmentation of the pentose substrate in the photorespiration process. Both reactions occur simultaneously and in competition at the same active site. The sequence is that of Ribulose bisphosphate carboxylase large chain from Chloranthus spicatus (Chulantree).